A 338-amino-acid polypeptide reads, in one-letter code: DNA-directed RNA polymerase subunit alpha (338 aa).

An alpha N-terminal domain (alpha-NTD) region spans residues 1–234; sequence MIERNWNELI…DQLQIFITFE (234 aa). An alpha C-terminal domain (alpha-CTD) region spans residues 250 to 338; the sequence is FNPALLKKVD…DLAKKFEDQI (89 aa).

It belongs to the RNA polymerase alpha chain family. As to quaternary structure, homodimer. The RNAP catalytic core consists of 2 alpha, 1 beta, 1 beta' and 1 omega subunit. When a sigma factor is associated with the core the holoenzyme is formed, which can initiate transcription.

It catalyses the reaction RNA(n) + a ribonucleoside 5'-triphosphate = RNA(n+1) + diphosphate. Its function is as follows. DNA-dependent RNA polymerase catalyzes the transcription of DNA into RNA using the four ribonucleoside triphosphates as substrates. This Caulobacter vibrioides (strain ATCC 19089 / CIP 103742 / CB 15) (Caulobacter crescentus) protein is DNA-directed RNA polymerase subunit alpha.